Reading from the N-terminus, the 437-residue chain is MEREIAFGLENFNTDINTMKRNVSEVISLLGLNKIRDKQTTEISGGEKQRVAIASVVSMDPQIIAFDEPISQLDPISAEEVLNSIKRLNRDLGKTIILVEQRLDKCFHMADRIIFMENGEIIGQGTPKNIPENIVNKYHLPTITYIFKEAGLQTLPITVKEGRDIIRNNKFQDLKEDDLKFKEVVMEIEKLNFEYERGYKILKDLSFKLHRGEIMTVMGENGAGKSTLFKIIAGMIDKYKGKVLIDNKNIKSLKLKERIKKIGYLSQNPNDYFGRKTVFEEVGYTLKNIGEYKEEKVEQVMKLLNISYLEDKNPRDLSGGEKQRVAIACTIITDPEILILDEPTRGMDAEAKENLGEIIKTLAEVGKSIVVITHDSDFAGDYSHSVMLMFNGEIVAKGCARDILYNSMYYSPQISKIFKNKCNIISSKRAIELLKVI.

ABC transporter domains lie at 1–143 and 179–416; these read MERE…LPTI and LKFK…QISK. 219-226 is a binding site for ATP; sequence GENGAGKS.

Belongs to the ABC transporter superfamily.

It localises to the cell membrane. In terms of biological role, probably part of an ABC transporter complex. Responsible for energy coupling to the transport system. This is Putative ABC transporter ATP-binding protein CTC_00753 from Clostridium tetani (strain Massachusetts / E88).